Here is a 288-residue protein sequence, read N- to C-terminus: Putative N-terminal acetyltransferase 2 (288 aa).

The disordered stretch occupies residues Thr68 to Pro90.

As to quaternary structure, heterooligomeric.

The protein resides in the cytoplasm. Functionally, maybe involved in N-terminal acetylation of proteins. N-acetylation plays a role in normal eukaryotic translation and processing, protect against proteolytic degradation and protein turnover. The sequence is that of Putative N-terminal acetyltransferase 2 (NAT2) from Saccharomyces cerevisiae (strain ATCC 204508 / S288c) (Baker's yeast).